Consider the following 526-residue polypeptide: tRNA-2-methylthio-N(6)-dimethylallyladenosine synthase (526 aa).

A disordered region spans residues 1 to 24 (MTQQLNHAKVNQHPGQATLPETAE). An MTTase N-terminal domain is found at 28–144 (RTYEVKTYGC…LPTLLQRAEH (117 aa)). [4Fe-4S] cluster contacts are provided by Cys-37, Cys-73, Cys-107, Cys-181, Cys-185, and Cys-188. The Radical SAM core domain maps to 167–403 (RESAYAGWVS…MVVQEQVCEE (237 aa)). Positions 406–477 (QKLIGTTVEL…PFFLIADSGV (72 aa)) constitute a TRAM domain.

It belongs to the methylthiotransferase family. MiaB subfamily. As to quaternary structure, monomer. [4Fe-4S] cluster is required as a cofactor.

The protein localises to the cytoplasm. The enzyme catalyses N(6)-dimethylallyladenosine(37) in tRNA + (sulfur carrier)-SH + AH2 + 2 S-adenosyl-L-methionine = 2-methylsulfanyl-N(6)-dimethylallyladenosine(37) in tRNA + (sulfur carrier)-H + 5'-deoxyadenosine + L-methionine + A + S-adenosyl-L-homocysteine + 2 H(+). Catalyzes the methylthiolation of N6-(dimethylallyl)adenosine (i(6)A), leading to the formation of 2-methylthio-N6-(dimethylallyl)adenosine (ms(2)i(6)A) at position 37 in tRNAs that read codons beginning with uridine. In Corynebacterium glutamicum (strain R), this protein is tRNA-2-methylthio-N(6)-dimethylallyladenosine synthase.